The sequence spans 411 residues: uncharacterized protein (411 aa).

The tract at residues 32–108 is disordered; it reads LGGDPAPKPT…PEHPRRIPIP (77 aa).

This is an uncharacterized protein from Ictalurid herpesvirus 1 (strain Auburn) (IcHV-1).